Consider the following 746-residue polypeptide: Dystrobrevin alpha (746 aa).

The segment at 1–288 (MIEDSGKRGN…SHSNQHQMKE (288 aa)) is interaction with MAGEE1. The segment at 238 to 294 (FHPVECSYCHSESMMGFRYRCQQCHNYQLCQDCFWRGHAGGSHSNQHQMKEYTSWKS) adopts a ZZ-type zinc-finger fold. Residues Cys-243, Cys-246, Cys-258, Cys-261, Cys-267, Cys-270, His-280, and His-284 each contribute to the Zn(2+) site. A syntrophin-binding region region spans residues 397 to 447 (DRLADEHVLIGLYVNMLRNDPPCMLESSNRLDEEHRLIARYAARLAAESSS). Residues 458–557 (DISFTIDANK…KLLKEEELKQ (100 aa)) adopt a coiled-coil conformation. 3 disordered regions span residues 555–577 (LKQG…SRPI), 646–667 (ETES…APSP), and 684–721 (YIHG…VRQL). The segment covering 563–576 (SSPRSSPSHTISRP) has biased composition (low complexity). Ser-666 carries the post-translational modification Phosphoserine.

This sequence belongs to the dystrophin family. Dystrobrevin subfamily. Interacts with dystrophin, utrophin and the syntrophins SNTA1, SNTB1, SNTB2, SNTG1 and SNTG2. Binds dystrobrevin binding protein 1. Interacts with MAGEE1. Interacts with Ctnnal1. The interaction is required for correct localization of both Ctnnal1 and Dtna. As to quaternary structure, does not interact with utrophin. In terms of assembly, does not interact with syntrophin. Phosphorylation of isoform 2 on tyrosine kinase substrate domain present in the C-terminus. In terms of tissue distribution, expressed in skeletal muscle, heart, lung and brain. Sarcolemma and neuromuscular junction in skeletal muscle. Isoform 2 is restricted to the neuromuscular junction. Isoforms 5 and 6 are only expressed in muscle.

Its subcellular location is the cytoplasm. The protein localises to the synapse. The protein resides in the cell membrane. Its function is as follows. Involved in synapse maturation and required for normal muscle function. This chain is Dystrobrevin alpha (Dtna), found in Mus musculus (Mouse).